Consider the following 626-residue polypeptide: DNA-directed RNA polymerase subunit gamma (626 aa).

Zn(2+) is bound by residues cysteine 71, cysteine 73, cysteine 86, and cysteine 89. Mg(2+) contacts are provided by aspartate 467, aspartate 469, and aspartate 471.

Belongs to the RNA polymerase beta' chain family. RpoC1 subfamily. In terms of assembly, in cyanobacteria the RNAP catalytic core is composed of 2 alpha, 1 beta, 1 beta', 1 gamma and 1 omega subunit. When a sigma factor is associated with the core the holoenzyme is formed, which can initiate transcription. It depends on Mg(2+) as a cofactor. Zn(2+) serves as cofactor.

It catalyses the reaction RNA(n) + a ribonucleoside 5'-triphosphate = RNA(n+1) + diphosphate. In terms of biological role, DNA-dependent RNA polymerase catalyzes the transcription of DNA into RNA using the four ribonucleoside triphosphates as substrates. This Synechocystis sp. (strain ATCC 27184 / PCC 6803 / Kazusa) protein is DNA-directed RNA polymerase subunit gamma.